We begin with the raw amino-acid sequence, 195 residues long: MELNTHNAEILLSAANKSHYPQDELPEIALAGRSNVGKSSFINTMLNRKNLARTSGKPGKTQLLNFFNIDDKMRFVDVPGYGYARVSKKEREKWGRMIEEYLTTRENLRAVVSLVDLRHDPSADDVQMYEFLKYYEIPVIIVATKADKIPRGKWNKHESAIKKKLNFDPSDDFILFSSVSKAGMDEAWDAILEKL.

Residues 24–195 (ELPEIALAGR…EAWDAILEKL (172 aa)) form the EngB-type G domain. GTP is bound by residues 32 to 39 (GRSNVGKS), 59 to 63 (GKTQL), 77 to 80 (DVPG), 144 to 147 (TKAD), and 176 to 178 (FSS). Mg(2+)-binding residues include Ser-39 and Thr-61.

This sequence belongs to the TRAFAC class TrmE-Era-EngA-EngB-Septin-like GTPase superfamily. EngB GTPase family. It depends on Mg(2+) as a cofactor.

Necessary for normal cell division and for the maintenance of normal septation. The chain is Probable GTP-binding protein EngB from Streptococcus pneumoniae (strain ATCC 700669 / Spain 23F-1).